A 480-amino-acid chain; its full sequence is Ammonium transporter 3 member 3 (480 aa).

A run of 11 helical transmembrane segments spans residues 31–51 (SATL…GSIV), 59–79 (SAFM…VWAY), 135–155 (MVYF…GSLL), 169–189 (LWIT…GFLF), 198–218 (GGYV…YWVG), 233–253 (ILLV…FNGG), 265–287 (AVLN…DVFF), 292–314 (SVIG…AGLV), 318–337 (AAIV…MMVL), 361–381 (GFLG…SLFL), and 407–427 (LFVT…ISLI).

The protein belongs to the ammonia transporter channel (TC 1.A.11.2) family.

Its subcellular location is the membrane. In terms of biological role, involved in ammonium transport. This is Ammonium transporter 3 member 3 (AMT3-3) from Oryza sativa subsp. japonica (Rice).